Reading from the N-terminus, the 335-residue chain is Glutaredoxin-3 (335 aa).

An N-acetylalanine modification is found at Ala-2. A Thioredoxin domain is found at 2–117 (AAGAAEAAVA…LTKKVQRHAS (116 aa)). Phosphoserine occurs at positions 117 and 120. Glutaredoxin domains are found at residues 144 to 236 (APCM…PKLE) and 237 to 335 (ERLK…RGEN). Positions 159 and 261 each coordinate [2Fe-2S] cluster.

As to quaternary structure, homodimer; the homodimer is independent of 2Fe-2S clusters. Heterotrimer; forms a heterotrimeric complex composed by two BOLA2 molecules and one GLRX3 molecule; linked by [2Fe-2S] clusters. Interacts (via N-terminus) with PRKCQ/PKC-theta. Interacts (via C-terminus) with CSRP3. Interacts with CSRP2. In terms of tissue distribution, expressed in heart, spleen, testis and, to a lower extent, in thymus and peripheral blood leukocytes. Weakly expressed in lung, placenta, colon and small intestine.

It is found in the cytoplasm. Its subcellular location is the cytosol. The protein localises to the cell cortex. It localises to the myofibril. The protein resides in the sarcomere. It is found in the z line. Its function is as follows. Together with BOLA2, acts as a cytosolic iron-sulfur (Fe-S) cluster assembly factor that facilitates [2Fe-2S] cluster insertion into a subset of cytosolic proteins. Acts as a critical negative regulator of cardiac hypertrophy and a positive inotropic regulator. Required for hemoglobin maturation. Does not possess any thyoredoxin activity since it lacks the conserved motif that is essential for catalytic activity. The protein is Glutaredoxin-3 (GLRX3) of Homo sapiens (Human).